Reading from the N-terminus, the 78-residue chain is Acyl carrier protein (78 aa).

The Carrier domain maps to 2-77; that stretch reads SEIAQKVKSI…QAIAYLEQHV (76 aa). Ser-37 is modified (O-(pantetheine 4'-phosphoryl)serine).

This sequence belongs to the acyl carrier protein (ACP) family. Post-translationally, 4'-phosphopantetheine is transferred from CoA to a specific serine of apo-ACP by AcpS. This modification is essential for activity because fatty acids are bound in thioester linkage to the sulfhydryl of the prosthetic group.

Its subcellular location is the cytoplasm. The protein operates within lipid metabolism; fatty acid biosynthesis. In terms of biological role, carrier of the growing fatty acid chain in fatty acid biosynthesis. In Cytophaga hutchinsonii (strain ATCC 33406 / DSM 1761 / CIP 103989 / NBRC 15051 / NCIMB 9469 / D465), this protein is Acyl carrier protein.